The chain runs to 227 residues: Cytochrome c oxidase subunit 2 (227 aa).

The Mitochondrial intermembrane segment spans residues 1–14 (MAYPFQLGLQDATS). A helical membrane pass occupies residues 15 to 45 (PIMEELTNFHDHTLMIVFLISSLVLYIISLM). Over 46-59 (LTTKLTHTSTMDAQ) the chain is Mitochondrial matrix. The helical transmembrane segment at 60 to 87 (EVETIWTILPAVILILIALPSLRILYMM) threads the bilayer. Over 88–227 (DEINNPALTV…HFENWSASMI (140 aa)) the chain is Mitochondrial intermembrane. Residues His161, Cys196, Glu198, Cys200, His204, and Met207 each contribute to the Cu cation site. Mg(2+) is bound at residue Glu198.

The protein belongs to the cytochrome c oxidase subunit 2 family. As to quaternary structure, component of the cytochrome c oxidase (complex IV, CIV), a multisubunit enzyme composed of 14 subunits. The complex is composed of a catalytic core of 3 subunits MT-CO1, MT-CO2 and MT-CO3, encoded in the mitochondrial DNA, and 11 supernumerary subunits COX4I, COX5A, COX5B, COX6A, COX6B, COX6C, COX7A, COX7B, COX7C, COX8 and NDUFA4, which are encoded in the nuclear genome. The complex exists as a monomer or a dimer and forms supercomplexes (SCs) in the inner mitochondrial membrane with NADH-ubiquinone oxidoreductase (complex I, CI) and ubiquinol-cytochrome c oxidoreductase (cytochrome b-c1 complex, complex III, CIII), resulting in different assemblies (supercomplex SCI(1)III(2)IV(1) and megacomplex MCI(2)III(2)IV(2)). Found in a complex with TMEM177, COA6, COX18, COX20, SCO1 and SCO2. Interacts with TMEM177 in a COX20-dependent manner. Interacts with COX20. Interacts with COX16. The cofactor is Cu cation.

It is found in the mitochondrion inner membrane. It catalyses the reaction 4 Fe(II)-[cytochrome c] + O2 + 8 H(+)(in) = 4 Fe(III)-[cytochrome c] + 2 H2O + 4 H(+)(out). Functionally, component of the cytochrome c oxidase, the last enzyme in the mitochondrial electron transport chain which drives oxidative phosphorylation. The respiratory chain contains 3 multisubunit complexes succinate dehydrogenase (complex II, CII), ubiquinol-cytochrome c oxidoreductase (cytochrome b-c1 complex, complex III, CIII) and cytochrome c oxidase (complex IV, CIV), that cooperate to transfer electrons derived from NADH and succinate to molecular oxygen, creating an electrochemical gradient over the inner membrane that drives transmembrane transport and the ATP synthase. Cytochrome c oxidase is the component of the respiratory chain that catalyzes the reduction of oxygen to water. Electrons originating from reduced cytochrome c in the intermembrane space (IMS) are transferred via the dinuclear copper A center (CU(A)) of subunit 2 and heme A of subunit 1 to the active site in subunit 1, a binuclear center (BNC) formed by heme A3 and copper B (CU(B)). The BNC reduces molecular oxygen to 2 water molecules using 4 electrons from cytochrome c in the IMS and 4 protons from the mitochondrial matrix. In Berylmys bowersi (Bower's white-toothed rat), this protein is Cytochrome c oxidase subunit 2 (MT-CO2).